The sequence spans 270 residues: CASP-like protein 4A1 (270 aa).

The interval 1–110 (MEELEKTQKF…PSFSSSSSTP (110 aa)) is disordered. The Cytoplasmic segment spans residues 1-121 (MEELEKTQKF…ESKWASLIRK (121 aa)). Polar residues predominate over residues 24–66 (SSPINFEMSSRSSLHSLPQTTIESPPDSPTLSSIPDSHGSSPH). A compositionally biased stretch (basic and acidic residues) spans 85–97 (NGEEEKKVSESRR). Over residues 100–110 (RPSFSSSSSTP) the composition is skewed to low complexity. A helical transmembrane segment spans residues 122 to 142 (ALLGFRVIAFVSCLVSFSVMV). Over 143–161 (SDRDKGWAHDSFYNYKEFR) the chain is Extracellular. The helical transmembrane segment at 162-182 (FCLAANVIGFVYSGFMICDLV) threads the bilayer. Residues 183–198 (YLLSTSIRRSRHNLRH) lie on the Cytoplasmic side of the membrane. The chain crosses the membrane as a helical span at residues 199-221 (FLEFGLDQMLAYLLASASTSASI). The Extracellular portion of the chain corresponds to 222–246 (RVDDWQSNWGADKFPDLARASVALS). Residues 247-267 (YVSFVAFAFCSLASGYALCAL) traverse the membrane as a helical segment. The Cytoplasmic portion of the chain corresponds to 268–270 (RSI).

Belongs to the Casparian strip membrane proteins (CASP) family. Homodimer and heterodimers.

The protein resides in the cell membrane. The chain is CASP-like protein 4A1 from Arabidopsis thaliana (Mouse-ear cress).